We begin with the raw amino-acid sequence, 225 residues long: Probable CDP-diacylglycerol--inositol 3-phosphatidyltransferase 2 (225 aa).

Transmembrane regions (helical) follow at residues 6 to 26 and 29 to 49; these read PATL…RVLL and IAFS…FFSF. Mg(2+) is bound by residues aspartate 52 and aspartate 55. Glycine 56, arginine 60, and serine 66 together coordinate a CDP-1,2-diacyl-sn-glycerol. The Mg(2+) site is built by aspartate 73 and aspartate 77. The active-site Proton acceptor is aspartate 77. Helical transmembrane passes span 84–104, 143–163, and 184–204; these read LLVI…LLAL, MFMG…LLIA, and LSLL…INVI.

The protein belongs to the CDP-alcohol phosphatidyltransferase class-I family. Requires Mg(2+) as cofactor. Mn(2+) serves as cofactor.

Its subcellular location is the membrane. The enzyme catalyses a CDP-1,2-diacyl-sn-glycerol + myo-inositol = a 1,2-diacyl-sn-glycero-3-phospho-(1D-myo-inositol) + CMP + H(+). Functionally, catalyzes the biosynthesis of phosphatidylinositol (PtdIns) as well as PtdIns:inositol exchange reaction. May thus act to reduce an excessive cellular PtdIns content. The exchange activity is due to the reverse reaction of PtdIns synthase and is dependent on CMP, which is tightly bound to the enzyme. This chain is Probable CDP-diacylglycerol--inositol 3-phosphatidyltransferase 2 (PIS2), found in Arabidopsis thaliana (Mouse-ear cress).